The sequence spans 616 residues: Dihydroxy-acid dehydratase (616 aa).

Residue D81 coordinates Mg(2+). C122 contributes to the [2Fe-2S] cluster binding site. Residues D123 and K124 each coordinate Mg(2+). K124 carries the post-translational modification N6-carboxylysine. C195 lines the [2Fe-2S] cluster pocket. E491 is a Mg(2+) binding site. S517 (proton acceptor) is an active-site residue.

This sequence belongs to the IlvD/Edd family. In terms of assembly, homodimer. It depends on [2Fe-2S] cluster as a cofactor. Mg(2+) is required as a cofactor.

The catalysed reaction is (2R)-2,3-dihydroxy-3-methylbutanoate = 3-methyl-2-oxobutanoate + H2O. It catalyses the reaction (2R,3R)-2,3-dihydroxy-3-methylpentanoate = (S)-3-methyl-2-oxopentanoate + H2O. It participates in amino-acid biosynthesis; L-isoleucine biosynthesis; L-isoleucine from 2-oxobutanoate: step 3/4. The protein operates within amino-acid biosynthesis; L-valine biosynthesis; L-valine from pyruvate: step 3/4. Functions in the biosynthesis of branched-chain amino acids. Catalyzes the dehydration of (2R,3R)-2,3-dihydroxy-3-methylpentanoate (2,3-dihydroxy-3-methylvalerate) into 2-oxo-3-methylpentanoate (2-oxo-3-methylvalerate) and of (2R)-2,3-dihydroxy-3-methylbutanoate (2,3-dihydroxyisovalerate) into 2-oxo-3-methylbutanoate (2-oxoisovalerate), the penultimate precursor to L-isoleucine and L-valine, respectively. The protein is Dihydroxy-acid dehydratase of Escherichia coli (strain SMS-3-5 / SECEC).